Here is a 116-residue protein sequence, read N- to C-terminus: MSTSAVTEPVDIVARLQIAGSAEEFFELLGVAYDPKLLNVARLHILRRMGQYLAGEDLEHLPGDEAAARCKAVLERAYADFVASSPLDQRVFKVLKDAVAPKTPKRPAFVPLDALK.

The protein belongs to the NifW family. As to quaternary structure, homotrimer; associates with NifD.

Functionally, may protect the nitrogenase Fe-Mo protein from oxidative damage. The polypeptide is Nitrogenase-stabilizing/protective protein NifW (Rhodopseudomonas palustris (strain TIE-1)).